A 350-amino-acid chain; its full sequence is tRNA uridine(34) hydroxylase (350 aa).

Residues 146–240 form the Rhodanese domain; sequence DDPEAVFVDM…YARRAREQGL (95 aa). Cysteine 200 (cysteine persulfide intermediate) is an active-site residue.

Belongs to the TrhO family.

The catalysed reaction is uridine(34) in tRNA + AH2 + O2 = 5-hydroxyuridine(34) in tRNA + A + H2O. Functionally, catalyzes oxygen-dependent 5-hydroxyuridine (ho5U) modification at position 34 in tRNAs. This chain is tRNA uridine(34) hydroxylase, found in Erwinia tasmaniensis (strain DSM 17950 / CFBP 7177 / CIP 109463 / NCPPB 4357 / Et1/99).